We begin with the raw amino-acid sequence, 149 residues long: Ribonuclease pancreatic (149 aa).

An N-terminal signal peptide occupies residues 1–25 (MGLEKSLILFPLFFLLLGWVQPSLG). Substrate contacts are provided by K32 and R35. The active-site Proton acceptor is H37. Cystine bridges form between C51/C109, C65/C120, C83/C135, and C90/C97. Substrate contacts are provided by residues 66–70 (KPVNT) and K91. The Proton donor role is filled by H144.

The protein belongs to the pancreatic ribonuclease family. As to quaternary structure, monomer. Interacts with and forms tight 1:1 complexes with RNH1. Dimerization of two such complexes may occur. Interaction with RNH1 inhibits this protein. Pancreas.

It is found in the secreted. It catalyses the reaction an [RNA] containing cytidine + H2O = an [RNA]-3'-cytidine-3'-phosphate + a 5'-hydroxy-ribonucleotide-3'-[RNA].. The catalysed reaction is an [RNA] containing uridine + H2O = an [RNA]-3'-uridine-3'-phosphate + a 5'-hydroxy-ribonucleotide-3'-[RNA].. Functionally, endonuclease that catalyzes the cleavage of RNA on the 3' side of pyrimidine nucleotides. Acts on single-stranded and double-stranded RNA. The protein is Ribonuclease pancreatic (Rnase1) of Mus musculus (Mouse).